The chain runs to 819 residues: DNA topoisomerase 4 subunit A (819 aa).

The Topo IIA-type catalytic domain occupies 30–496; sequence LPDIRDGLKP…QIIEIDTASL (467 aa). The active-site O-(5'-phospho-DNA)-tyrosine intermediate is the Tyr118.

Belongs to the type II topoisomerase GyrA/ParC subunit family. ParC type 2 subfamily. In terms of assembly, heterotetramer composed of ParC and ParE.

It localises to the cell membrane. It catalyses the reaction ATP-dependent breakage, passage and rejoining of double-stranded DNA.. In terms of biological role, topoisomerase IV is essential for chromosome segregation. It relaxes supercoiled DNA. Performs the decatenation events required during the replication of a circular DNA molecule. This is DNA topoisomerase 4 subunit A from Streptococcus pyogenes serotype M6 (strain ATCC BAA-946 / MGAS10394).